The sequence spans 350 residues: 4-hydroxy-2-oxovalerate aldolase 3 (350 aa).

One can recognise a Pyruvate carboxyltransferase domain in the interval Val13–Met265. Arg21–Asp22 is a substrate binding site. A Mn(2+)-binding site is contributed by Asp22. The active-site Proton acceptor is the His25. Substrate is bound by residues Ser175 and His204. Residues His204 and His206 each contribute to the Mn(2+) site. Tyr295 provides a ligand contact to substrate.

This sequence belongs to the 4-hydroxy-2-oxovalerate aldolase family.

It catalyses the reaction (S)-4-hydroxy-2-oxopentanoate = acetaldehyde + pyruvate. This is 4-hydroxy-2-oxovalerate aldolase 3 (lapG) from Azotobacter vinelandii (strain DJ / ATCC BAA-1303).